A 257-amino-acid chain; its full sequence is Sad1-interacting factor 1 (257 aa).

Residues 16–68 are disordered; the sequence is LNKIKQGGASRINQILGQNSDDSQSDVRATASEEAVHSETATPVTPMSSGFME. Composition is skewed to polar residues over residues 26–37 and 54–63; these read RINQILGQNSDD and ETATPVTPMS. S35 is modified (phosphoserine). The residue at position 132 (S132) is a Phosphoserine. T134 bears the Phosphothreonine mark. 2 helical membrane-spanning segments follow: residues 160 to 180 and 231 to 251; these read LLAISIVVIVCYFKHLPLLPW and FTQLITDACMTIFALGLCCYF.

Interacts with kms1 and sad1.

Its subcellular location is the membrane. In Schizosaccharomyces pombe (strain 972 / ATCC 24843) (Fission yeast), this protein is Sad1-interacting factor 1 (sif1).